The primary structure comprises 129 residues: MDINPLLYLQAFNNDATTFNTQGHILEQQSDSPYFDTFANAMQAYLDTKQGGNDEEGTIILMDDEDFNDSESLEDFLQMLSEEELNDGFSSDDEPEEHVILTEDNQGEPSETPQATFDITEFIKIDDED.

The span at 86-96 (NDGFSSDDEPE) shows a compositional bias: acidic residues. A disordered region spans residues 86–116 (NDGFSSDDEPEEHVILTEDNQGEPSETPQAT). The span at 103–116 (EDNQGEPSETPQAT) shows a compositional bias: polar residues.

This sequence belongs to the asfivirus D129L family.

This is an uncharacterized protein from African swine fever virus (strain Badajoz 1971 Vero-adapted) (Ba71V).